The following is a 224-amino-acid chain: 7-cyano-7-deazaguanine synthase (224 aa).

8–18 (LSGGMDSAAVI) contributes to the ATP binding site. Positions 186, 196, 199, and 202 each coordinate Zn(2+).

Belongs to the QueC family. It depends on Zn(2+) as a cofactor.

The enzyme catalyses 7-carboxy-7-deazaguanine + NH4(+) + ATP = 7-cyano-7-deazaguanine + ADP + phosphate + H2O + H(+). It participates in purine metabolism; 7-cyano-7-deazaguanine biosynthesis. Functionally, catalyzes the ATP-dependent conversion of 7-carboxy-7-deazaguanine (CDG) to 7-cyano-7-deazaguanine (preQ(0)). The sequence is that of 7-cyano-7-deazaguanine synthase from Xanthomonas euvesicatoria pv. vesicatoria (strain 85-10) (Xanthomonas campestris pv. vesicatoria).